Reading from the N-terminus, the 391-residue chain is 3-ketoacyl-CoA thiolase (391 aa).

Residue Cys95 is the Acyl-thioester intermediate of the active site. Catalysis depends on proton acceptor residues His347 and Cys377.

This sequence belongs to the thiolase-like superfamily. Thiolase family. As to quaternary structure, heterotetramer of two alpha chains (FadB) and two beta chains (FadA).

It localises to the cytoplasm. The enzyme catalyses an acyl-CoA + acetyl-CoA = a 3-oxoacyl-CoA + CoA. It functions in the pathway lipid metabolism; fatty acid beta-oxidation. Its function is as follows. Catalyzes the final step of fatty acid oxidation in which acetyl-CoA is released and the CoA ester of a fatty acid two carbons shorter is formed. This chain is 3-ketoacyl-CoA thiolase, found in Ectopseudomonas oleovorans (Pseudomonas oleovorans).